A 938-amino-acid polypeptide reads, in one-letter code: RIPOR family member 3 (938 aa).

Phosphoserine occurs at positions 9, 24, and 340. At threonine 345 the chain carries Phosphothreonine. Serine 351 and serine 384 each carry phosphoserine. Disordered regions lie at residues 402 to 430 and 579 to 603; these read EMDSFSSEDPRDTETSTSASTSDVGFLPV and FGGSQAPERDSPPPPRPSLKVSPSE.

It belongs to the RIPOR family.

This is RIPOR family member 3 from Mus musculus (Mouse).